We begin with the raw amino-acid sequence, 197 residues long: Peptide deformylase (197 aa).

2 residues coordinate Fe cation: Cys-106 and His-148. Glu-149 is an active-site residue. His-152 is a Fe cation binding site.

The protein belongs to the polypeptide deformylase family. Fe(2+) serves as cofactor.

The enzyme catalyses N-terminal N-formyl-L-methionyl-[peptide] + H2O = N-terminal L-methionyl-[peptide] + formate. Functionally, removes the formyl group from the N-terminal Met of newly synthesized proteins. Requires at least a dipeptide for an efficient rate of reaction. N-terminal L-methionine is a prerequisite for activity but the enzyme has broad specificity at other positions. This chain is Peptide deformylase, found in Mycobacterium bovis (strain ATCC BAA-935 / AF2122/97).